A 216-amino-acid chain; its full sequence is Refilin-B (216 aa).

The tract at residues methionine 1–valine 55 is disordered. Residues serine 6 and serine 26 each carry the phosphoserine modification.

This sequence belongs to the Refilin family. As to quaternary structure, interacts with FLNA and FLNB. In terms of tissue distribution, detected in various tissues, with highest expression in lung, followed by spleen.

It is found in the cytoplasm. The protein localises to the cytoskeleton. In terms of biological role, involved in the regulation of the perinuclear actin network and nuclear shape through interaction with filamins. Plays an essential role in the formation of cartilaginous skeletal elements. The sequence is that of Refilin-B from Mus musculus (Mouse).